We begin with the raw amino-acid sequence, 337 residues long: MVTGVTAANMTNVLGTAVVPAQLKETPLKSDRRSNKPIMEKRRRARINNCLNELKTLILDATKKDPARHSKLEKADILEKTVKHLQELQRQQAAMQQAADPKIVNKFKAGFADCVNEVSRFPGIEPAQRRRLLQHLSNCINGVKTELHQQQRQQQQQSIHAQMLPSPPSSPEQDSQQGAAAPYLFGIQQTASGYFLPNGMQVIPTKLPNGSIALVLPQSLPQQQQQQLLQHQQQQQQLAVAAAAAAAAAAQQQPMLVSMPQRTASTGSASSHSSAGYESAPGSSSSCSYAPPSPANSSYEPMDIKPSVIQRVPMEQQPLSLVIKKQIKEEEQPWRPW.

Positions 29-48 (KSDRRSNKPIMEKRRRARIN) are interaction with Topors. Positions 31-88 (DRRSNKPIMEKRRRARINNCLNELKTLILDATKKDPARHSKLEKADILEKTVKHLQEL) constitute a bHLH domain. The Orange domain maps to 107 to 136 (FKAGFADCVNEVSRFPGIEPAQRRRLLQHL). 2 disordered regions span residues 146–178 (ELHQ…SQQG) and 259–311 (MPQR…VIQR). The segment covering 263–301 (TASTGSASSHSSAGYESAPGSSSSCSYAPPSPANSSYEP) has biased composition (low complexity). The short motif at 334–337 (WRPW) is the WRPW motif element.

As to quaternary structure, transcription repression requires formation of a complex with a corepressor protein (Groucho). Interacts with gro (via WPRW motif) and Topors. Post-translationally, ubiquitinated by Topors.

It is found in the nucleus. Functionally, pair-rule protein that regulates embryonic segmentation and adult bristle patterning. Transcriptional repressor of genes that require a bHLH protein for their transcription (e.g. ftz). The polypeptide is Protein hairy (Drosophila melanogaster (Fruit fly)).